The following is a 1564-amino-acid chain: Abnormal spindle-like microcephaly-associated protein homolog (1564 aa).

IQ domains are found at residues 31–60 (YLWA…MLKS), 220–251 (LKKN…VIIQ), 270–299 (TRSA…SVIK), 293–322 (ILTS…ATIK), 366–395 (MRES…AVIS), 389–420 (QRKA…IIIQ), 439–468 (VKKA…AAVK), 462–491 (QSVA…SIIK), 512–541 (AKAA…AAMK), 535–566 (EHQA…LVIQ), 608–639 (QHTC…LLIQ), 658–687 (TKAA…AAIT), 681–712 (CNTA…IIIQ), 731–762 (LKKT…TFIK), 754–785 (MHRA…IVIQ), 804–835 (ILKA…TLIQ), 827–856 (LRIA…ITRT), 877–908 (LRHS…TLIQ), 900–931 (MHIA…IWIQ), 949–980 (LQNA…AFIQ), 972–1003 (MHRA…VVIQ), 1022–1053 (QRYS…ILIQ), 1045–1076 (MYFS…IFIQ), 1095–1126 (LRKA…VLIQ), 1168–1199 (QWHS…IIIQ), 1304–1333 (HTQA…AATR), 1327–1358 (MHLA…VIIQ), 1377–1406 (VQKS…EKMA), 1452–1483 (QSRA…RIQS), 1474–1503 (QKCA…QKRA), and 1500–1531 (QKRA…VVLQ).

The protein localises to the cytoplasm. The protein resides in the nucleus. In terms of biological role, probable role in mitotic spindle regulation and coordination of mitotic processes. May have a preferential role in regulating neurogenesis. The protein is Abnormal spindle-like microcephaly-associated protein homolog (ASPM) of Ateles geoffroyi (Black-handed spider monkey).